The following is a 75-amino-acid chain: Exodeoxyribonuclease 7 small subunit (75 aa).

The protein belongs to the XseB family. Heterooligomer composed of large and small subunits.

The protein localises to the cytoplasm. It carries out the reaction Exonucleolytic cleavage in either 5'- to 3'- or 3'- to 5'-direction to yield nucleoside 5'-phosphates.. In terms of biological role, bidirectionally degrades single-stranded DNA into large acid-insoluble oligonucleotides, which are then degraded further into small acid-soluble oligonucleotides. This chain is Exodeoxyribonuclease 7 small subunit, found in Listeria monocytogenes serotype 4b (strain CLIP80459).